The following is a 149-amino-acid chain: Large ribosomal subunit protein uL13 (149 aa).

This sequence belongs to the universal ribosomal protein uL13 family. In terms of assembly, part of the 50S ribosomal subunit.

This protein is one of the early assembly proteins of the 50S ribosomal subunit, although it is not seen to bind rRNA by itself. It is important during the early stages of 50S assembly. The chain is Large ribosomal subunit protein uL13 from Chlamydia pneumoniae (Chlamydophila pneumoniae).